The sequence spans 693 residues: Phosphoribosylformylglycinamidine synthase subunit PurL (693 aa).

His34 is a catalytic residue. Tyr37 and Lys76 together coordinate ATP. Glu78 is a binding site for Mg(2+). Residues Ser79–His82 and Arg101 each bind substrate. Catalysis depends on His80, which acts as the Proton acceptor. Asp102 contributes to the Mg(2+) binding site. A substrate-binding site is contributed by Gln222. Asp248 is a Mg(2+) binding site. A substrate-binding site is contributed by Glu292–Gln294. Positions 470 and 507 each coordinate ATP. Ser510 serves as a coordination point for substrate.

Belongs to the FGAMS family. In terms of assembly, monomer. Part of the FGAM synthase complex composed of 1 PurL, 1 PurQ and 2 PurS subunits.

Its subcellular location is the cytoplasm. The catalysed reaction is N(2)-formyl-N(1)-(5-phospho-beta-D-ribosyl)glycinamide + L-glutamine + ATP + H2O = 2-formamido-N(1)-(5-O-phospho-beta-D-ribosyl)acetamidine + L-glutamate + ADP + phosphate + H(+). It functions in the pathway purine metabolism; IMP biosynthesis via de novo pathway; 5-amino-1-(5-phospho-D-ribosyl)imidazole from N(2)-formyl-N(1)-(5-phospho-D-ribosyl)glycinamide: step 1/2. Its function is as follows. Part of the phosphoribosylformylglycinamidine synthase complex involved in the purines biosynthetic pathway. Catalyzes the ATP-dependent conversion of formylglycinamide ribonucleotide (FGAR) and glutamine to yield formylglycinamidine ribonucleotide (FGAM) and glutamate. The FGAM synthase complex is composed of three subunits. PurQ produces an ammonia molecule by converting glutamine to glutamate. PurL transfers the ammonia molecule to FGAR to form FGAM in an ATP-dependent manner. PurS interacts with PurQ and PurL and is thought to assist in the transfer of the ammonia molecule from PurQ to PurL. The chain is Phosphoribosylformylglycinamidine synthase subunit PurL from Pyrobaculum calidifontis (strain DSM 21063 / JCM 11548 / VA1).